The primary structure comprises 248 residues: Probable transcriptional regulatory protein PSPTO_3980 (248 aa).

The protein belongs to the TACO1 family.

It localises to the cytoplasm. This chain is Probable transcriptional regulatory protein PSPTO_3980, found in Pseudomonas syringae pv. tomato (strain ATCC BAA-871 / DC3000).